The primary structure comprises 337 residues: Glucokinase (337 aa).

Residue 11 to 16 (ADIGGT) participates in ATP binding.

Belongs to the bacterial glucokinase family.

It is found in the cytoplasm. The catalysed reaction is D-glucose + ATP = D-glucose 6-phosphate + ADP + H(+). The protein is Glucokinase of Xylella fastidiosa (strain M12).